The following is a 94-amino-acid chain: Aspartyl/glutamyl-tRNA(Asn/Gln) amidotransferase subunit C (94 aa).

This sequence belongs to the GatC family. As to quaternary structure, heterotrimer of A, B and C subunits.

It catalyses the reaction L-glutamyl-tRNA(Gln) + L-glutamine + ATP + H2O = L-glutaminyl-tRNA(Gln) + L-glutamate + ADP + phosphate + H(+). The catalysed reaction is L-aspartyl-tRNA(Asn) + L-glutamine + ATP + H2O = L-asparaginyl-tRNA(Asn) + L-glutamate + ADP + phosphate + 2 H(+). Its function is as follows. Allows the formation of correctly charged Asn-tRNA(Asn) or Gln-tRNA(Gln) through the transamidation of misacylated Asp-tRNA(Asn) or Glu-tRNA(Gln) in organisms which lack either or both of asparaginyl-tRNA or glutaminyl-tRNA synthetases. The reaction takes place in the presence of glutamine and ATP through an activated phospho-Asp-tRNA(Asn) or phospho-Glu-tRNA(Gln). The sequence is that of Aspartyl/glutamyl-tRNA(Asn/Gln) amidotransferase subunit C from Hydrogenobaculum sp. (strain Y04AAS1).